The following is a 265-amino-acid chain: Glutamate racemase (265 aa).

Residues 10–11 (DS) and 42–43 (YG) each bind substrate. Cysteine 73 (proton donor/acceptor) is an active-site residue. Substrate is bound at residue 74–75 (NT). Cysteine 183 serves as the catalytic Proton donor/acceptor. Residue 184–185 (TH) coordinates substrate.

This sequence belongs to the aspartate/glutamate racemases family.

The catalysed reaction is L-glutamate = D-glutamate. The protein operates within cell wall biogenesis; peptidoglycan biosynthesis. Its function is as follows. Provides the (R)-glutamate required for cell wall biosynthesis. The chain is Glutamate racemase from Corynebacterium diphtheriae (strain ATCC 700971 / NCTC 13129 / Biotype gravis).